The primary structure comprises 375 residues: Pectate lyase 1 (375 aa).

Residues 1–21 (MASCTLLAVLVFLCAIVSCFS) form the signal peptide. A disulfide bridge connects residues cysteine 28 and cysteine 45. The N-linked (GlcNAc...) asparagine glycan is linked to asparagine 110. A disulfide bridge links cysteine 128 with cysteine 147. A glycan (N-linked (GlcNAc...) asparagine) is linked at asparagine 148. Aspartate 170 contacts Ca(2+). Asparagine 178 carries an N-linked (GlcNAc...) asparagine glycan. The Ca(2+) site is built by aspartate 194 and aspartate 198. Arginine 250 is an active-site residue. N-linked (GlcNAc...) asparagine glycosylation is present at asparagine 293. A disulfide bridge connects residues cysteine 306 and cysteine 312. A glycan (N-linked (GlcNAc...) asparagine) is linked at asparagine 352.

Belongs to the polysaccharide lyase 1 family. Amb a subfamily. Ca(2+) is required as a cofactor.

It catalyses the reaction Eliminative cleavage of (1-&gt;4)-alpha-D-galacturonan to give oligosaccharides with 4-deoxy-alpha-D-galact-4-enuronosyl groups at their non-reducing ends.. The protein operates within glycan metabolism; pectin degradation; 2-dehydro-3-deoxy-D-gluconate from pectin: step 2/5. Has pectate lyase activity. The polypeptide is Pectate lyase 1 (Chamaecyparis obtusa (Hinoki false-cypress)).